Here is a 272-residue protein sequence, read N- to C-terminus: uncharacterized protein (272 aa).

The interval 193–250 is disordered; the sequence is AFLLPNNSKGVEKSEENEDGVTDNDSSNVNSSTNESPNPTDINVCSNDDATDNTENNL. A compositionally biased stretch (low complexity) spans 215–233; that stretch reads DNDSSNVNSSTNESPNPTD. Residues 235–248 are compositionally biased toward polar residues; the sequence is NVCSNDDATDNTEN.

The protein belongs to the pal1 family.

It localises to the cytoplasm. It is found in the nucleus. This is an uncharacterized protein from Schizosaccharomyces pombe (strain 972 / ATCC 24843) (Fission yeast).